The following is a 720-amino-acid chain: ABC transporter G family member STR2 (720 aa).

Topologically, residues 1–467 (MRHANGRRGD…NFINIRRTPE (467 aa)) are cytoplasmic. One can recognise an ABC transporter domain in the interval 25 to 274 (LEFSNLTYTV…LGRMGRKVPK (250 aa)). 70–77 (GPSGAGKS) contacts ATP. A disordered region spans residues 313–346 (GAHEMSIVPPSPAPSHREGRGHDRSNKRLHLKDQ). Basic and acidic residues predominate over residues 327–346 (SHREGRGHDRSNKRLHLKDQ). The chain crosses the membrane as a helical span at residues 468–488 (LFLSRLVVLTVMGIMMATMFM). Residues 489-502 (HPKKNLQGITNRLS) are Extracellular-facing. The chain crosses the membrane as a helical span at residues 503-523 (FFIFTVCLFFFSSNDAVPAFI). Topologically, residues 524-547 (QERFIFVRETSHNKYRASSYTIAG) are cytoplasmic. The helical transmembrane segment at 548–568 (LITYLPFLAVQAAVYAVIVWF) threads the bilayer. The Extracellular portion of the chain corresponds to 569 to 575 (ALSLRGP). Residues 576 to 596 (FIYFLIVLYMSLLSTNSFVVF) form a helical membrane-spanning segment. Residues 597-604 (VSSVVPNY) lie on the Cytoplasmic side of the membrane. Residues 605–625 (ILGYAAVIAFTALFFLFCGYF) form a helical membrane-spanning segment. Over 626–693 (LNSHDMPQYW…QVESKKWEKV (68 aa)) the chain is Extracellular. Asn-681 carries an N-linked (GlcNAc...) asparagine glycan. A helical transmembrane segment spans residues 694 to 714 (YIMLAWAIVYRILFYIVLRFF). The Cytoplasmic portion of the chain corresponds to 715–720 (SKNQRT).

This sequence belongs to the ABC transporter superfamily. ABCG family. Stunted arbuscule (STR) subfamily. Heterodimerizes with STR; the resulting transporter is located in the peri-arbuscular membrane.

The protein resides in the cell membrane. Its function is as follows. Together with STR, required for arbuscule development in arbuscular mycorrhizal (AM) symbiosis. The sequence is that of ABC transporter G family member STR2 from Petunia hybrida (Petunia).